Here is a 511-residue protein sequence, read N- to C-terminus: D-alanine--D-alanyl carrier protein ligase (511 aa).

Threonine 152 to serine 153 is a binding site for ATP. Aspartate 199 serves as a coordination point for D-alanine. Asparagine 294–threonine 299 contacts ATP. Valine 303 serves as a coordination point for D-alanine. Residues aspartate 385, tyrosine 397–arginine 400, and lysine 499 contribute to the ATP site. Lysine 499 provides a ligand contact to D-alanine.

Belongs to the ATP-dependent AMP-binding enzyme family. DltA subfamily.

It localises to the cytoplasm. The catalysed reaction is holo-[D-alanyl-carrier protein] + D-alanine + ATP = D-alanyl-[D-alanyl-carrier protein] + AMP + diphosphate. It functions in the pathway cell wall biogenesis; lipoteichoic acid biosynthesis. Catalyzes the first step in the D-alanylation of lipoteichoic acid (LTA), the activation of D-alanine and its transfer onto the D-alanyl carrier protein (Dcp) DltC. In an ATP-dependent two-step reaction, forms a high energy D-alanyl-AMP intermediate, followed by transfer of the D-alanyl residue as a thiol ester to the phosphopantheinyl prosthetic group of the Dcp. D-alanylation of LTA plays an important role in modulating the properties of the cell wall in Gram-positive bacteria, influencing the net charge of the cell wall. In Streptococcus agalactiae serotype III (strain NEM316), this protein is D-alanine--D-alanyl carrier protein ligase.